Consider the following 354-residue polypeptide: GTPase Obg (354 aa).

An Obg domain is found at M1–L159. The region spanning A160–F333 is the OBG-type G domain. Residues G166–S173, F191–T195, D212–G215, T283–D286, and S314–V316 contribute to the GTP site. S173 and T193 together coordinate Mg(2+).

The protein belongs to the TRAFAC class OBG-HflX-like GTPase superfamily. OBG GTPase family. In terms of assembly, monomer. Mg(2+) is required as a cofactor.

Its subcellular location is the cytoplasm. An essential GTPase which binds GTP, GDP and possibly (p)ppGpp with moderate affinity, with high nucleotide exchange rates and a fairly low GTP hydrolysis rate. Plays a role in control of the cell cycle, stress response, ribosome biogenesis and in those bacteria that undergo differentiation, in morphogenesis control. The polypeptide is GTPase Obg (Anaeromyxobacter dehalogenans (strain 2CP-C)).